The primary structure comprises 52 residues: Insulin (52 aa).

3 disulfides stabilise this stretch: Cys7–Cys38, Cys19–Cys51, and Cys37–Cys42.

It belongs to the insulin family. Heterodimer of a B chain and an A chain linked by two disulfide bonds.

It is found in the secreted. In terms of biological role, insulin decreases blood glucose concentration. It increases cell permeability to monosaccharides, amino acids and fatty acids. It accelerates glycolysis, the pentose phosphate cycle, and glycogen synthesis in liver. This Amia calva (Bowfin) protein is Insulin (ins).